The following is a 132-amino-acid chain: D-ribose pyranase (132 aa).

H20 serves as the catalytic Proton donor. Residues D28, H99, and Y121–N123 each bind substrate.

The protein belongs to the RbsD / FucU family. RbsD subfamily. In terms of assembly, homodecamer.

It localises to the cytoplasm. The enzyme catalyses beta-D-ribopyranose = beta-D-ribofuranose. It participates in carbohydrate metabolism; D-ribose degradation; D-ribose 5-phosphate from beta-D-ribopyranose: step 1/2. Its function is as follows. Catalyzes the interconversion of beta-pyran and beta-furan forms of D-ribose. This chain is D-ribose pyranase, found in Lactococcus lactis subsp. cremoris (strain MG1363).